Here is a 226-residue protein sequence, read N- to C-terminus: Cytidylate kinase (226 aa).

Residue Gly-11–Thr-19 coordinates ATP.

Belongs to the cytidylate kinase family. Type 1 subfamily.

It is found in the cytoplasm. It carries out the reaction CMP + ATP = CDP + ADP. The enzyme catalyses dCMP + ATP = dCDP + ADP. The polypeptide is Cytidylate kinase (Pediococcus pentosaceus (strain ATCC 25745 / CCUG 21536 / LMG 10740 / 183-1w)).